Reading from the N-terminus, the 261-residue chain is Triosephosphate isomerase (261 aa).

10–12 contributes to the substrate binding site; it reads NWK. Residue H100 is the Electrophile of the active site. E172 acts as the Proton acceptor in catalysis. Substrate contacts are provided by residues G178, S218, and 239 to 240; that span reads GG.

It belongs to the triosephosphate isomerase family. As to quaternary structure, homodimer.

It is found in the cytoplasm. It catalyses the reaction D-glyceraldehyde 3-phosphate = dihydroxyacetone phosphate. Its pathway is carbohydrate biosynthesis; gluconeogenesis. It functions in the pathway carbohydrate degradation; glycolysis; D-glyceraldehyde 3-phosphate from glycerone phosphate: step 1/1. Involved in the gluconeogenesis. Catalyzes stereospecifically the conversion of dihydroxyacetone phosphate (DHAP) to D-glyceraldehyde-3-phosphate (G3P). This chain is Triosephosphate isomerase, found in Mycobacterium sp. (strain JLS).